Here is a 124-residue protein sequence, read N- to C-terminus: Small ribosomal subunit protein uS13 (124 aa).

The segment at 94–124 is disordered; sequence GLPLRGQRTKNNSRTRKGKRKTVANKKKATK. The span at 100 to 124 shows a compositional bias: basic residues; that stretch reads QRTKNNSRTRKGKRKTVANKKKATK.

It belongs to the universal ribosomal protein uS13 family. As to quaternary structure, part of the 30S ribosomal subunit. Forms a loose heterodimer with protein S19. Forms two bridges to the 50S subunit in the 70S ribosome.

Its function is as follows. Located at the top of the head of the 30S subunit, it contacts several helices of the 16S rRNA. In the 70S ribosome it contacts the 23S rRNA (bridge B1a) and protein L5 of the 50S subunit (bridge B1b), connecting the 2 subunits; these bridges are implicated in subunit movement. Contacts the tRNAs in the A and P-sites. This chain is Small ribosomal subunit protein uS13, found in Flavobacterium psychrophilum (strain ATCC 49511 / DSM 21280 / CIP 103535 / JIP02/86).